A 727-amino-acid chain; its full sequence is 1,4-alpha-glucan branching enzyme GlgB (727 aa).

The Nucleophile role is filled by D405. The active-site Proton donor is the E458.

The protein belongs to the glycosyl hydrolase 13 family. GlgB subfamily. In terms of assembly, monomer.

It catalyses the reaction Transfers a segment of a (1-&gt;4)-alpha-D-glucan chain to a primary hydroxy group in a similar glucan chain.. It functions in the pathway glycan biosynthesis; glycogen biosynthesis. Its function is as follows. Catalyzes the formation of the alpha-1,6-glucosidic linkages in glycogen by scission of a 1,4-alpha-linked oligosaccharide from growing alpha-1,4-glucan chains and the subsequent attachment of the oligosaccharide to the alpha-1,6 position. The sequence is that of 1,4-alpha-glucan branching enzyme GlgB from Yersinia pseudotuberculosis serotype O:1b (strain IP 31758).